We begin with the raw amino-acid sequence, 122 residues long: Large ribosomal subunit protein uL14c (122 aa).

It belongs to the universal ribosomal protein uL14 family. Part of the 50S ribosomal subunit.

It is found in the plastid. The protein resides in the chloroplast. In terms of biological role, binds to 23S rRNA. The polypeptide is Large ribosomal subunit protein uL14c (Buxus microphylla (Littleleaf boxwood)).